Here is a 194-residue protein sequence, read N- to C-terminus: AN1-type zinc finger protein 2A (194 aa).

AN1-type zinc fingers lie at residues 4 to 52 and 94 to 142; these read PDLG…QKDV and KIFT…RPTI. Residues cysteine 10, cysteine 15, cysteine 25, cysteine 28, cysteine 33, histidine 36, histidine 42, cysteine 44, cysteine 100, cysteine 105, cysteine 115, cysteine 118, cysteine 123, histidine 126, histidine 132, and cysteine 134 each contribute to the Zn(2+) site. The tract at residues 145–164 is disordered; that stretch reads GCSPVTASESKPSGDPHPGS.

It is found in the cytoplasm. The protein resides in the nucleus. In Pongo abelii (Sumatran orangutan), this protein is AN1-type zinc finger protein 2A (ZFAND2A).